Here is a 288-residue protein sequence, read N- to C-terminus: Plasmodesmata-located protein 6 (288 aa).

The N-terminal stretch at 1 to 22 (MFATKTVLFIAVVSLLGTFSSA) is a signal peptide. Over 23–256 (AVDTFIYGGC…NNDDDEIEKT (234 aa)) the chain is Extracellular. Gnk2-homologous domains are found at residues 25–132 (DTFI…NTTF) and 137–234 (DKTV…ARGG). Cystine bridges form between Cys32–Cys110, Cys84–Cys95, Cys98–Cys123, Cys145–Cys212, Cys188–Cys197, and Cys200–Cys225. The chain crosses the membrane as a helical span at residues 257–277 (LAIIVGLIAGVTLLVVFLSFM). The necessary and sufficient for plasmodesmal targeting stretch occupies residues 257 to 277 (LAIIVGLIAGVTLLVVFLSFM). Residues 278–288 (AKSCERGKGGK) are Cytoplasmic-facing.

It belongs to the cysteine-rich repeat secretory protein family. Plasmodesmata-located proteins (PDLD) subfamily. In terms of assembly, (Microbial infection) Interacts with Grapevine fanleaf virus (GFLV) 2B-MP. In terms of tissue distribution, highly expressed in inflorescence silique (at mRNA level).

It localises to the cell membrane. The protein localises to the cell junction. The protein resides in the plasmodesma. Functionally, modulates cell-to-cell trafficking. In Arabidopsis thaliana (Mouse-ear cress), this protein is Plasmodesmata-located protein 6.